Reading from the N-terminus, the 148-residue chain is MVTVYDVPADKLIQKTAEKLKEMNIGVPEWVDFVKTGVSRERRPDQDDWWYIRCASILRKIYIYGPVGVSRLRTAYGGRKNRGHEPEHFYKGSGNIIRKALQELEKLGLVEKTPEGRVVTPKGRSFLDNIAKEVRDEIINEIPALAKY.

This sequence belongs to the eukaryotic ribosomal protein eS19 family. As to quaternary structure, part of the 30S ribosomal subunit.

Its function is as follows. May be involved in maturation of the 30S ribosomal subunit. This Methanocaldococcus jannaschii (strain ATCC 43067 / DSM 2661 / JAL-1 / JCM 10045 / NBRC 100440) (Methanococcus jannaschii) protein is Small ribosomal subunit protein eS19.